The primary structure comprises 503 residues: Maturase K (503 aa).

This sequence belongs to the intron maturase 2 family. MatK subfamily.

Its subcellular location is the plastid. It localises to the chloroplast. Usually encoded in the trnK tRNA gene intron. Probably assists in splicing its own and other chloroplast group II introns. The sequence is that of Maturase K from Liquidambar orientalis (Oriental sweet gum).